We begin with the raw amino-acid sequence, 310 residues long: Methionyl-tRNA formyltransferase (310 aa).

Position 109–112 (109–112) interacts with (6S)-5,6,7,8-tetrahydrofolate; it reads SLLP.

This sequence belongs to the Fmt family.

The catalysed reaction is L-methionyl-tRNA(fMet) + (6R)-10-formyltetrahydrofolate = N-formyl-L-methionyl-tRNA(fMet) + (6S)-5,6,7,8-tetrahydrofolate + H(+). Its function is as follows. Attaches a formyl group to the free amino group of methionyl-tRNA(fMet). The formyl group appears to play a dual role in the initiator identity of N-formylmethionyl-tRNA by promoting its recognition by IF2 and preventing the misappropriation of this tRNA by the elongation apparatus. The polypeptide is Methionyl-tRNA formyltransferase (Agathobacter rectalis (strain ATCC 33656 / DSM 3377 / JCM 17463 / KCTC 5835 / VPI 0990) (Eubacterium rectale)).